The chain runs to 122 residues: Acidic phospholipase A2 CTs-A3 (122 aa).

Disulfide bonds link C26-C116, C28-C44, C43-C95, C49-C122, C50-C88, C57-C81, and C75-C86. Ca(2+) contacts are provided by Y27, G29, and G31. H47 is a catalytic residue. D48 provides a ligand contact to Ca(2+). D89 is an active-site residue.

The cofactor is Ca(2+). In terms of tissue distribution, expressed by the venom gland.

The protein localises to the secreted. The catalysed reaction is a 1,2-diacyl-sn-glycero-3-phosphocholine + H2O = a 1-acyl-sn-glycero-3-phosphocholine + a fatty acid + H(+). In terms of biological role, snake venom phospholipase A2 (PLA2) that shows a moderate inhibition of ADP-induced human platelet aggregation when tested on platelet rich plasma. Exhibits moderate hydrolytic activities and prefers the anionic micelles (dPPC with deoxycholate) to the zwitterionic micelles (dPPC with Triton X-100). PLA2 catalyzes the calcium-dependent hydrolysis of the 2-acyl groups in 3-sn-phosphoglycerides. In Trimeresurus stejnegeri (Chinese green tree viper), this protein is Acidic phospholipase A2 CTs-A3.